The following is a 373-amino-acid chain: MMKKDAPRGTRTGFTTGACSAAAARAAVIGLVTGQVPDAVECLLPNGDLVTFAVQDGRVEGVGGGVGGGVSAHAMVIKDAGDDPDCTDKAHLTADVRLRHDLPGQVLLAGGFGVGTVTMPGLGLAVGGPAINPVPRRNIEANVRAVGQGLLDEVGLEVTISVPQGEEMTKKTLNARLGILGGISILGTTGIVKPYSTAAYRASVVQGVQVAGTLGHGVVVLTTGGRTEKFVMEEMPELPEPAFVQMGDFLRYAMGAAVKAGLKKVVIGGMVGKLTKIAQGETITHAGRAEVDTGLLAELAASVGAPPDVCDAIRGNETARYAGERMDALGLGQAFHTALAQRVIQTLRTRYPDQFELKVLVCDFDGRKIAEAS.

The protein belongs to the CbiD family.

The catalysed reaction is Co-precorrin-5B + S-adenosyl-L-methionine = Co-precorrin-6A + S-adenosyl-L-homocysteine. It participates in cofactor biosynthesis; adenosylcobalamin biosynthesis; cob(II)yrinate a,c-diamide from sirohydrochlorin (anaerobic route): step 6/10. Its function is as follows. Catalyzes the methylation of C-1 in cobalt-precorrin-5B to form cobalt-precorrin-6A. The polypeptide is Cobalt-precorrin-5B C(1)-methyltransferase (Polaromonas sp. (strain JS666 / ATCC BAA-500)).